Consider the following 185-residue polypeptide: Elongation factor P (185 aa).

It belongs to the elongation factor P family.

The protein localises to the cytoplasm. It functions in the pathway protein biosynthesis; polypeptide chain elongation. In terms of biological role, involved in peptide bond synthesis. Stimulates efficient translation and peptide-bond synthesis on native or reconstituted 70S ribosomes in vitro. Probably functions indirectly by altering the affinity of the ribosome for aminoacyl-tRNA, thus increasing their reactivity as acceptors for peptidyl transferase. The polypeptide is Elongation factor P (Anoxybacillus flavithermus (strain DSM 21510 / WK1)).